Here is a 302-residue protein sequence, read N- to C-terminus: Putative gluconeogenesis factor (302 aa).

The protein belongs to the gluconeogenesis factor family.

It localises to the cytoplasm. Its function is as follows. Required for morphogenesis under gluconeogenic growth conditions. The protein is Putative gluconeogenesis factor (ybhK) of Salmonella typhimurium (strain LT2 / SGSC1412 / ATCC 700720).